The following is a 167-amino-acid chain: Lipoprotein signal peptidase (167 aa).

3 helical membrane passes run 8–28, 61–81, and 93–113; these read FFLLGLILTVGIDQTVKYWIM, FSHWGLIALTLIILIFLLWLW, and FGLTLIIGGAIGNLIDRICFY. Residues Asp117 and Asp136 contribute to the active site. The helical transmembrane segment at 126–146 threads the bilayer; the sequence is IFYFAVFNLADTFITLGVIAI.

Belongs to the peptidase A8 family.

It is found in the cell inner membrane. The enzyme catalyses Release of signal peptides from bacterial membrane prolipoproteins. Hydrolyzes -Xaa-Yaa-Zaa-|-(S,diacylglyceryl)Cys-, in which Xaa is hydrophobic (preferably Leu), and Yaa (Ala or Ser) and Zaa (Gly or Ala) have small, neutral side chains.. The protein operates within protein modification; lipoprotein biosynthesis (signal peptide cleavage). Its function is as follows. This protein specifically catalyzes the removal of signal peptides from prolipoproteins. In Bartonella quintana (strain Toulouse) (Rochalimaea quintana), this protein is Lipoprotein signal peptidase.